Here is a 570-residue protein sequence, read N- to C-terminus: Chaperonin GroEL 1 (570 aa).

Residues 42 to 45 (TLGP), Lys63, 99 to 103 (DGTTT), Gly427, and Asp507 contribute to the ATP site. The segment at 537-570 (EDEDDDDGGGGGGGGMPAGGAGGMGGMGGMGGMM) is disordered. Residues 545 to 570 (GGGGGGGMPAGGAGGMGGMGGMGGMM) show a composition bias toward gly residues.

Belongs to the chaperonin (HSP60) family. Forms a cylinder of 14 subunits composed of two heptameric rings stacked back-to-back. Interacts with the co-chaperonin GroES.

It localises to the cytoplasm. It catalyses the reaction ATP + H2O + a folded polypeptide = ADP + phosphate + an unfolded polypeptide.. Functionally, together with its co-chaperonin GroES, plays an essential role in assisting protein folding. The GroEL-GroES system forms a nano-cage that allows encapsulation of the non-native substrate proteins and provides a physical environment optimized to promote and accelerate protein folding. The protein is Chaperonin GroEL 1 of Salinibacter ruber (strain DSM 13855 / M31).